Reading from the N-terminus, the 445-residue chain is Mitochondrial-processing peptidase subunit alpha-2 (445 aa).

The transit peptide at 1-13 (MIGRFIARNYTTS) directs the protein to the mitochondrion.

Belongs to the peptidase M16 family. As to quaternary structure, heterodimer of alpha and beta subunits, forming the mitochondrial processing protease (MPP) in which subunit alpha is involved in substrate recognition and binding and subunit beta is the catalytic subunit.

Its subcellular location is the mitochondrion matrix. Functionally, substrate recognition and binding subunit of the essential mitochondrial processing protease (MPP), which cleaves the mitochondrial sequence off newly imported precursors proteins. The chain is Mitochondrial-processing peptidase subunit alpha-2 (mppA2) from Dictyostelium discoideum (Social amoeba).